We begin with the raw amino-acid sequence, 63 residues long: Beta-defensin 6 (63 aa).

A signal peptide spans 1–22 (MKIHYLLFAFILVMLSPLAAFS). Gln-23 carries the post-translational modification Pyrrolidone carboxylic acid. Disulfide bonds link Cys-31/Cys-59, Cys-38/Cys-52, and Cys-42/Cys-60.

This sequence belongs to the beta-defensin family. Predominantly expressed in skeletal muscle, also expressed in esophagus, tongue, and trachea. Also expressed in lung when induced by lipopolysaccharide.

The protein localises to the secreted. Its function is as follows. Has potent antibacterial activity against E.coli (ATCC 25922). In Mus musculus (Mouse), this protein is Beta-defensin 6 (Defb6).